The following is a 536-amino-acid chain: Dual specificity calcium/calmodulin-dependent 3',5'-cyclic nucleotide phosphodiesterase 1B (536 aa).

A disordered region spans residues 1–20 (MELSPRSPPEMLEESDCPSP). 2 positions are modified to phosphoserine: S7 and S15. Calmodulin-binding stretches follow at residues 27 to 47 (PSKKMWIKLRSLLRYMVKQLE) and 118 to 141 (EKPKFRSIVHAVQAGIFVERMFRR). Residues 146–503 (VGPTYSTAVL…QKWKERAASG (358 aa)) enclose the PDEase domain. H223 serves as the catalytic Proton donor. H227, H263, D264, and D370 together coordinate Zn(2+). Residue D264 coordinates Mg(2+). Disordered regions lie at residues 447 to 474 (LADEDSKSKNQPSFQWRQPSLDVEVGDP) and 494 to 536 (QKWK…GNLD). Polar residues predominate over residues 455–464 (KNQPSFQWRQ). 2 positions are modified to phosphoserine: S466 and S514.

This sequence belongs to the cyclic nucleotide phosphodiesterase family. PDE1 subfamily. Homodimer. It depends on Zn(2+) as a cofactor. The cofactor is Mg(2+).

Its subcellular location is the cytoplasm. It is found in the cytosol. It carries out the reaction a nucleoside 3',5'-cyclic phosphate + H2O = a nucleoside 5'-phosphate + H(+). The enzyme catalyses 3',5'-cyclic GMP + H2O = GMP + H(+). It catalyses the reaction 3',5'-cyclic AMP + H2O = AMP + H(+). Type I PDE are activated by the binding of calmodulin in the presence of Ca(2+). In terms of biological role, cyclic nucleotide phosphodiesterase with a dual specificity for the second messengers cAMP and cGMP, which are key regulators of many important physiological processes. Has a preference for cGMP as a substrate. In Homo sapiens (Human), this protein is Dual specificity calcium/calmodulin-dependent 3',5'-cyclic nucleotide phosphodiesterase 1B.